Consider the following 608-residue polypeptide: Actin-interacting protein 1 (608 aa).

WD repeat units follow at residues Glu62–Lys101, Pro106–Ser149, Gly150–Thr190, Asp193–Glu232, Ala237–Glu276, Gly323–Ile362, Gly366–Tyr403, Pro444–Lys483, Asp487–Asn526, Phe531–Ile570, and His575–Asn607.

Belongs to the WD repeat AIP1 family. As to expression, expressed in pupal wing cells.

It is found in the cytoplasm. The protein resides in the cytoskeleton. Functionally, induces disassembly of actin filaments in conjunction with ADF/cofilin family proteins. Together with GMF, promotes Arp2/3-nucleated actin filament array disassembly. Essential for organismal and cell viability. Required for the development of normal wing cell planar polarity. In egg chambers and together with GMF, plays an important role in directional migration of border cell clusters. The protein is Actin-interacting protein 1 (flr) of Drosophila melanogaster (Fruit fly).